The primary structure comprises 351 residues: S-adenosylmethionine:tRNA ribosyltransferase-isomerase (351 aa).

The protein belongs to the QueA family. In terms of assembly, monomer.

It localises to the cytoplasm. The catalysed reaction is 7-aminomethyl-7-carbaguanosine(34) in tRNA + S-adenosyl-L-methionine = epoxyqueuosine(34) in tRNA + adenine + L-methionine + 2 H(+). It functions in the pathway tRNA modification; tRNA-queuosine biosynthesis. Its function is as follows. Transfers and isomerizes the ribose moiety from AdoMet to the 7-aminomethyl group of 7-deazaguanine (preQ1-tRNA) to give epoxyqueuosine (oQ-tRNA). In Phocaeicola vulgatus (strain ATCC 8482 / DSM 1447 / JCM 5826 / CCUG 4940 / NBRC 14291 / NCTC 11154) (Bacteroides vulgatus), this protein is S-adenosylmethionine:tRNA ribosyltransferase-isomerase.